A 260-amino-acid chain; its full sequence is MRLALGVSYNGQAYQGWQSQLSRQTVQDQLEMALSKLASHRVSTLCAGRTDAGVHGLMQVIHFDTPLDRAPNSWVRGTNALLPRDIAVEWARPVPPEFHCRASALSRRYAYILLESPVRPSIDAGQVGWTFKPLEQVAMQQAASHLLGEHDFSSFRASACQALSPVKMLQRLDISRHGACWRFEFEANAFLHHMIRNIMGCLITVGQGKKPPEWLKEVLLARNRNVAAPTFSAHGLYFLGPRYAPHWGLPDRTPAFDRLP.

The active-site Nucleophile is the Asp51. Tyr109 contacts substrate.

It belongs to the tRNA pseudouridine synthase TruA family. In terms of assembly, homodimer.

The enzyme catalyses uridine(38/39/40) in tRNA = pseudouridine(38/39/40) in tRNA. Its function is as follows. Formation of pseudouridine at positions 38, 39 and 40 in the anticodon stem and loop of transfer RNAs. The protein is tRNA pseudouridine synthase A of Albidiferax ferrireducens (strain ATCC BAA-621 / DSM 15236 / T118) (Rhodoferax ferrireducens).